The primary structure comprises 156 residues: Large ribosomal subunit protein uL22 (156 aa).

The protein belongs to the universal ribosomal protein uL22 family. In terms of assembly, part of the 50S ribosomal subunit.

Functionally, this protein binds specifically to 23S rRNA. It makes multiple contacts with different domains of the 23S rRNA in the assembled 50S subunit and ribosome. Its function is as follows. The globular domain of the protein is located near the polypeptide exit tunnel on the outside of the subunit, while an extended beta-hairpin is found that lines the wall of the exit tunnel in the center of the 70S ribosome. This is Large ribosomal subunit protein uL22 from Sulfurisphaera tokodaii (strain DSM 16993 / JCM 10545 / NBRC 100140 / 7) (Sulfolobus tokodaii).